Here is a 631-residue protein sequence, read N- to C-terminus: MDYDYEKLGLKVGLEIHQQLNTKRKLFCNCPTKIRDDEPHGEIERVLRPSQSEMGHVDKAALLESKKEKKFIYQYYNDTTCLVELDDEPPHDVAPEAVDTALEVSTLMNMKMADEIQVMRKMVIDGSNTSGFQRTMFVSQEGFIETDYGNIGVTSICLEEDACKKIEDGKDYTKYCVDRLGIPLLEITTEPDITSPKMGKEAARRIGTILRATGKVKRGLGTIRQDVNISIKGGARIEVKGVQNLDLIEKIIENEVTRQISLNEIKEELLKRNAEVIDEIKDITELLKDTESKVLKSALKNKGVIKAILLNGFSGMIGREVQPGRRLGTEFSDRGKVLGGVGGLFHTDELPKYGITEEEVIKLKEFMSCGENDAVILVADKKNKVERALNAVIERAKESMIGIPEETRKALDDGNTSYLRPLPGAARMYPETDVPTITITEEKLEMVRNNLPEMPEEKLVRFVNEYELNEDLAKQMVMSYHVDLFESLAKKYSKIKPTLIATTLEATLKEIKREGLETEVLTEEHLDEVFKGLSEDKMSKEAVPDVIKGFIENPAKNLDEVLEIKGMSSMSVEEVESIIEDIINQNISTVNEKGMGAMGLLMGRCMAQLRGNADGKLINTTLQKKLKEKVQ.

The protein belongs to the GatB/GatE family. GatE subfamily. Heterodimer of GatD and GatE.

The catalysed reaction is L-glutamyl-tRNA(Gln) + L-glutamine + ATP + H2O = L-glutaminyl-tRNA(Gln) + L-glutamate + ADP + phosphate + H(+). Allows the formation of correctly charged Gln-tRNA(Gln) through the transamidation of misacylated Glu-tRNA(Gln) in organisms which lack glutaminyl-tRNA synthetase. The reaction takes place in the presence of glutamine and ATP through an activated gamma-phospho-Glu-tRNA(Gln). The GatDE system is specific for glutamate and does not act on aspartate. The polypeptide is Glutamyl-tRNA(Gln) amidotransferase subunit E (Methanococcus maripaludis (strain C7 / ATCC BAA-1331)).